A 208-amino-acid polypeptide reads, in one-letter code: Photosystem I reaction center subunit II-1, chloroplastic (208 aa).

Residues 1–45 constitute a chloroplast transit peptide; the sequence is MATQAAGIFNSAITTAATSGVKKLHFFSTTHRPKSLSFTKTAIRA. T48 carries the post-translational modification Phosphothreonine. Positions 49-72 are disordered; that stretch reads DSSAAAAAAPATKEAPVGFTPPQL. Residues 50–64 are compositionally biased toward low complexity; the sequence is SSAAAAAAPATKEAP. Positions 141 to 149 are ferredoxin and ferredoxin-oxidoreductase binding; it reads RLRSKYKIT.

This sequence belongs to the PsaD family. Interacts with PGRL1A and PGRL1B. In terms of processing, phosphorylated by a threonine specific thylakoid kinase in a light activated and redox-dependent manner.

The protein localises to the plastid. The protein resides in the chloroplast thylakoid membrane. In terms of biological role, psaD can form complexes with ferredoxin and ferredoxin-oxidoreductase in photosystem I (PS I) reaction center. PSAD may encode the ferredoxin-docking protein. This Arabidopsis thaliana (Mouse-ear cress) protein is Photosystem I reaction center subunit II-1, chloroplastic (psaD1).